The following is a 998-amino-acid chain: RNA-directed RNA polymerase (998 aa).

Residues 21-43 (IVIVSGCGAVAYCISKFWGYGAI) traverse the membrane as a helical segment. Residues 44–998 (APYPQSGGNR…AQPGAPTNPK (955 aa)) form a cytoplasmic region. Residues 91–282 (NGHAVSGAVR…LVYTIPQHTV (192 aa)) form a capping region. Asp692 serves as the catalytic For RdRp/TNTase activity. The interval 901 to 998 (AKQTRSNSGT…AQPGAPTNPK (98 aa)) is disordered. Low complexity predominate over residues 985 to 998 (PKAGAQPGAPTNPK).

Belongs to the nodaviridae RNA polymerase family. In terms of assembly, homododecamer. Forms 2 stacked rings of 35-nm in diameter, arranged in a crown-like structure at the opening of virus-induced replication vesicles. Interacts with protein B2. It depends on Mn(2+) as a cofactor.

Its subcellular location is the host mitochondrion outer membrane. The enzyme catalyses RNA(n) + a ribonucleoside 5'-triphosphate = RNA(n+1) + diphosphate. RNA-dependent RNA polymerase, which replicates the viral genome composed of 2 RNA segments, RNA1 and RNA2. Does not need an exogenous primer. Also possesses a terminal nucleotidyl transferase (TNTase) activity. The TNTase catalyzes the addition of nucleotide to the 3'-end of plus- and minus-stranded RNAs, probably to repair the 3'-end nucleotide loss. Forms the open necked connection to the cytosol of the virus-induced replication vesicles. Mediates viral RNA1 recruitment. In Hepialidae (ghost moths), this protein is RNA-directed RNA polymerase.